Reading from the N-terminus, the 135-residue chain is Transcription antitermination protein NusB (135 aa).

This sequence belongs to the NusB family.

Functionally, involved in transcription antitermination. Required for transcription of ribosomal RNA (rRNA) genes. Binds specifically to the boxA antiterminator sequence of the ribosomal RNA (rrn) operons. The protein is Transcription antitermination protein NusB of Lacticaseibacillus paracasei (strain ATCC 334 / BCRC 17002 / CCUG 31169 / CIP 107868 / KCTC 3260 / NRRL B-441) (Lactobacillus paracasei).